Here is a 200-residue protein sequence, read N- to C-terminus: MAKVLVLYYSMYGHIETMADAVAEGARSVPGTEVTIKRVAETIPADQAAAHGVKLDQKAPVATPDELANYDAIIFGTPTRFGNMAGQMRTFLDQTGGLWMKGALVGKIGSVFASTGTQHGGQETTITSFHSTLLHQGMVIVGVPYSCAGLVNMTEITGGTPYGATTLAGADGSRQPSQNELDIARFQGKHVASLALKIAG.

The Flavodoxin-like domain occupies 4-191; sequence VLVLYYSMYG…DIARFQGKHV (188 aa). FMN is bound by residues 10-15 and 79-81; these read SMYGHI and TRF. Tyrosine 12 serves as a coordination point for NAD(+). Tryptophan 99 is a substrate binding site. Residues 114–120 and histidine 135 contribute to the FMN site; that span reads STGTQHG.

It belongs to the WrbA family. Requires FMN as cofactor.

The catalysed reaction is a quinone + NADH + H(+) = a quinol + NAD(+). It carries out the reaction a quinone + NADPH + H(+) = a quinol + NADP(+). The protein is NAD(P)H dehydrogenase (quinone) of Paraburkholderia phytofirmans (strain DSM 17436 / LMG 22146 / PsJN) (Burkholderia phytofirmans).